The primary structure comprises 582 residues: MHNDKDLSTWQTFRRLWPTIAPFKAGLIVAGVALILNAASDTFMLSLLKPLLDDGFGKTDRSVLMWMPLVVIGLMILRGITSYISSYCISWVSGKVVMTMRRRLFGHMMGMPVSFFDKQSTGTLLSRITYDSEQVASSSSGALITVVREGASIIGLFIMMFYYSWQLSIILIVLAPIVSIAIRVVSKRFRNISKNMQNTMGQVTTSAEQMLKGHKEVLIFGGQEVETKRFDKVSNRMRLQGMKMVSASSISDPIIQLIASLALAFVLYAASFPSVMDSLTAGTITVVFSSMIALMRPLKSLTNVNAQFQRGMAACQTLFTILDSEQEKDEGKRVIERATGDVEFRNVTFTYPGRDVPALRNINLKIPAGKTVALVGRSGSGKSTIASLITRFYDIDEGEILMDGHDLREYTLASLRNQVALVSQNVHLFNDTVANNIAYARTEQYSREQIEEAARMAYAMDFINKMDNGLDTVIGENGVLLSGGQRQRIAIARALLRDSPILILDEATSALDTESERAIQAALDELQKNRTSLVIAHRLSTIEKADEIVVVEDGVIVERGTHNDLLEHRGVYAQLHKMQFGQ.

5 helical membrane-spanning segments follow: residues Leu-16–Leu-36, Leu-64–Ile-84, Ile-153–Val-173, Pro-253–Pro-273, and Val-275–Met-295. The 283-residue stretch at Ile-28–Arg-310 folds into the ABC transmembrane type-1 domain. The ABC transporter domain occupies Val-342 to Met-578. Gly-376–Ser-383 contributes to the ATP binding site.

It belongs to the ABC transporter superfamily. Lipid exporter (TC 3.A.1.106) family. As to quaternary structure, homodimer.

The protein localises to the cell inner membrane. It catalyses the reaction ATP + H2O + lipid A-core oligosaccharideSide 1 = ADP + phosphate + lipid A-core oligosaccharideSide 2.. In terms of biological role, involved in lipopolysaccharide (LPS) biosynthesis. Translocates lipid A-core from the inner to the outer leaflet of the inner membrane. Transmembrane domains (TMD) form a pore in the inner membrane and the ATP-binding domain (NBD) is responsible for energy generation. This chain is ATP-dependent lipid A-core flippase, found in Escherichia coli O6:K15:H31 (strain 536 / UPEC).